Reading from the N-terminus, the 542-residue chain is Phosphoacetylglucosamine mutase (542 aa).

An N-acetylmethionine modification is found at Met-1. A Phosphothreonine modification is found at Thr-62. The active-site Phosphoserine intermediate is the Ser-64. Mg(2+) contacts are provided by Ser-64, Asp-276, Asp-278, and Asp-280. Ser-64 is subject to Phosphoserine. Residues 370–372 (EAN), 496–500 (RPSGT), and Arg-505 each bind substrate.

This sequence belongs to the phosphohexose mutase family. Mg(2+) serves as cofactor.

The enzyme catalyses N-acetyl-alpha-D-glucosamine 1-phosphate = N-acetyl-D-glucosamine 6-phosphate. Its pathway is nucleotide-sugar biosynthesis; UDP-N-acetyl-alpha-D-glucosamine biosynthesis; N-acetyl-alpha-D-glucosamine 1-phosphate from alpha-D-glucosamine 6-phosphate (route I): step 2/2. With respect to regulation, inhibited by Mn(2+), Cd(2+), Zn(2+), Cu(2+) and Be(2+). In terms of biological role, catalyzes the conversion of GlcNAc-6-P into GlcNAc-1-P during the synthesis of uridine diphosphate/UDP-GlcNAc, a sugar nucleotide critical to multiple glycosylation pathways including protein N- and O-glycosylation. The protein is Phosphoacetylglucosamine mutase of Sus scrofa (Pig).